The primary structure comprises 485 residues: Serine/threonine-protein kinase 4 (485 aa).

The Protein kinase domain maps to 30–281; that stretch reads FDVLEKLGEG…ATELLQHPFI (252 aa). Residues 36 to 44 and Lys59 contribute to the ATP site; that span reads LGEGSYGSV. Asp149 (proton acceptor) is an active-site residue. Thr183 bears the Phosphothreonine; by autocatalysis mark. The 48-residue stretch at 431-478 folds into the SARAH domain; it reads YSFLKDWSVAEVQLKLNSLDPMMEREIEEIHHKYQAKRQPILEAIESK.

It belongs to the protein kinase superfamily. STE Ser/Thr protein kinase family. STE20 subfamily. Homodimer; mediated via the coiled-coil region. Requires Mg(2+) as cofactor. Post-translationally, autophosphorylated on Thr-183. Proteolytically cleaved by caspase-3 during apoptosis at Asp-326 resulting in a 37 kDa form. Proteolytic cleavage results in kinase activation and nuclear translocation of the truncated form (MST1/N).

The protein localises to the cytoplasm. Its subcellular location is the nucleus. It catalyses the reaction L-seryl-[protein] + ATP = O-phospho-L-seryl-[protein] + ADP + H(+). The catalysed reaction is L-threonyl-[protein] + ATP = O-phospho-L-threonyl-[protein] + ADP + H(+). Its activity is regulated as follows. The C-terminal non-catalytic region inhibits the kinase activity, the enzyme is activated by caspase-cleavage. Homodimerization and autophosphorylation of Thr-183 is also required for full activation. In terms of biological role, stress-activated, pro-apoptotic kinase which, following caspase-cleavage, enters the nucleus and induces chromatin condensation followed by internucleosomal DNA fragmentation. Key component of the Hippo signaling pathway which plays a pivotal role in organ size control and tumor suppression by restricting proliferation and promoting apoptosis. The core of this pathway is composed of a kinase cascade wherein stk3/mst2 and stk4/mst1, in complex with its regulatory protein sav1, phosphorylates and activates lats1/2 in complex with its regulatory protein mob1, which in turn phosphorylates and inactivates yap1 oncoprotein and wwtr1/taz. Phosphorylation of yap1 by lats2 inhibits its translocation into the nucleus to regulate cellular genes important for cell proliferation, cell death, and cell migration. Phosphorylates 'Ser-14' of histone H2B (H2BS14ph) during apoptosis. The polypeptide is Serine/threonine-protein kinase 4 (stk4) (Xenopus laevis (African clawed frog)).